The sequence spans 142 residues: Putative pre-16S rRNA nuclease (142 aa).

The protein belongs to the YqgF nuclease family.

The protein resides in the cytoplasm. In terms of biological role, could be a nuclease involved in processing of the 5'-end of pre-16S rRNA. This chain is Putative pre-16S rRNA nuclease, found in Shouchella clausii (strain KSM-K16) (Alkalihalobacillus clausii).